We begin with the raw amino-acid sequence, 379 residues long: Flap endonuclease 1 (379 aa).

Residues 1-105 form an N-domain region; it reads MGVKGLNQLI…GELEKRLLRR (105 aa). Mg(2+) is bound at residue Asp-34. Residues Arg-47 and Arg-71 each coordinate DNA. Asp-87, Glu-159, Glu-161, Asp-180, and Asp-182 together coordinate Mg(2+). Residues 123–254 form an I-domain region; sequence DMVRYEKRTV…VTAFKLIKEH (132 aa). Glu-159 contacts DNA. DNA is bound by residues Gly-232 and Asp-234. Asp-234 contacts Mg(2+). The segment at 341 to 349 is interaction with PCNA; it reads VQGRLDGFF. The interval 344-379 is disordered; sequence RLDGFFQSVPKPKDSADKKRKNDTKSAKSKKAKTRK. Residues 361–379 show a composition bias toward basic residues; it reads KKRKNDTKSAKSKKAKTRK.

Belongs to the XPG/RAD2 endonuclease family. FEN1 subfamily. Interacts with PCNA. Three molecules of FEN1 bind to one PCNA trimer with each molecule binding to one PCNA monomer. PCNA stimulates the nuclease activity without altering cleavage specificity. Requires Mg(2+) as cofactor. Phosphorylated. Phosphorylation upon DNA damage induces relocalization to the nuclear plasma.

The protein resides in the nucleus. The protein localises to the nucleolus. It localises to the nucleoplasm. It is found in the mitochondrion. Structure-specific nuclease with 5'-flap endonuclease and 5'-3' exonuclease activities involved in DNA replication and repair. During DNA replication, cleaves the 5'-overhanging flap structure that is generated by displacement synthesis when DNA polymerase encounters the 5'-end of a downstream Okazaki fragment. It enters the flap from the 5'-end and then tracks to cleave the flap base, leaving a nick for ligation. Also involved in the long patch base excision repair (LP-BER) pathway, by cleaving within the apurinic/apyrimidinic (AP) site-terminated flap. Acts as a genome stabilization factor that prevents flaps from equilibrating into structures that lead to duplications and deletions. Also possesses 5'-3' exonuclease activity on nicked or gapped double-stranded DNA, and exhibits RNase H activity. Also involved in replication and repair of rDNA and in repairing mitochondrial DNA. The chain is Flap endonuclease 1 from Debaryomyces hansenii (strain ATCC 36239 / CBS 767 / BCRC 21394 / JCM 1990 / NBRC 0083 / IGC 2968) (Yeast).